Reading from the N-terminus, the 137-residue chain is Basic phospholipase A2 homolog MT1 (137 aa).

An N-terminal signal peptide occupies residues 1–16 (MRTLWIVALLLVGVEG). Cystine bridges form between C42/C131, C44/C60, C59/C111, C65/C137, C66/C104, C73/C97, and C91/C102. Residues 121–133 (KKYKAYFKFKCKK) are important for membrane-damaging activities in eukaryotes and bacteria; heparin-binding.

The protein belongs to the phospholipase A2 family. Group II subfamily. K49 sub-subfamily. As to quaternary structure, binds to heparin. In terms of tissue distribution, expressed by the venom gland.

It is found in the secreted. Its activity is regulated as follows. Heparin and wedelolactone inhibit the myotoxic activity. The PLA2 inhibitor, para-bromophenacyl bromide (BPB), inhibits the myotoxic activity. In terms of biological role, snake venom phospholipase A2 homolog that lacks enzymatic activity. Has myotoxic activities. A model of myotoxic mechanism has been proposed: an apo Lys49-PLA2 is activated by the entrance of a hydrophobic molecule (e.g. fatty acid) at the hydrophobic channel of the protein leading to a reorientation of a monomer. This reorientation causes a transition between 'inactive' to 'active' states, causing alignment of C-terminal and membrane-docking sites (MDoS) side-by-side and putting the membrane-disruption sites (MDiS) in the same plane, exposed to solvent and in a symmetric position for both monomers. The MDoS region stabilizes the toxin on membrane by the interaction of charged residues with phospholipid head groups. Subsequently, the MDiS region destabilizes the membrane with penetration of hydrophobic residues. This insertion causes a disorganization of the membrane, allowing an uncontrolled influx of ions (i.e. calcium and sodium), and eventually triggering irreversible intracellular alterations and cell death. In Agkistrodon contortrix laticinctus (Broad-banded copperhead), this protein is Basic phospholipase A2 homolog MT1.